A 46-amino-acid chain; its full sequence is Crambin (46 aa).

Cystine bridges form between C3–C40, C4–C32, and C16–C26.

The protein belongs to the plant thionin (TC 1.C.44) family.

It is found in the secreted. In terms of biological role, the function of this hydrophobic plant seed protein is not known. In Crambe hispanica subsp. abyssinica (Abyssinian kale), this protein is Crambin (THI2).